A 1301-amino-acid chain; its full sequence is Zinc finger protein 532 (1301 aa).

Disordered regions lie at residues 26-206 (PKAA…RETE), 223-266 (AEDK…SSSK), and 281-366 (KAAS…IKTI). The span at 32–52 (SGHDDHESHMKQNAHGEDDSH) shows a compositional bias: basic and acidic residues. The segment covering 84–101 (PTGNGLHNGFLTASSLDS) has biased composition (polar residues). Positions 102–111 (YSKDGAKSLK) are enriched in basic and acidic residues. Residues 122–133 (KDSTFSQFSPIS) are compositionally biased toward polar residues. Residues serine 130, serine 133, and serine 134 each carry the phosphoserine modification. The span at 136-151 (EEFDDDEKIEVDDPPD) shows a compositional bias: acidic residues. A compositionally biased stretch (polar residues) spans 158-170 (SFRSNVLTGSAPQ). Lysine 175 is modified (N6-acetyllysine). Residues 182 to 195 (ENSSKTGLSTSGNV) show a composition bias toward polar residues. Composition is skewed to basic and acidic residues over residues 196–206 (EKNKAVKRETE) and 223–250 (AEDK…EKND). Threonine 205 is modified (phosphothreonine). Phosphoserine is present on residues serine 252, serine 307, and serine 314. The span at 303–315 (EVNDSPRAADKSP) shows a compositional bias: basic and acidic residues. The segment covering 337 to 359 (SISSENSSKGSPSSPAGSTPAIP) has biased composition (low complexity). The residue at position 434 (serine 434) is a Phosphoserine. Glycyl lysine isopeptide (Lys-Gly) (interchain with G-Cter in SUMO2) cross-links involve residues lysine 459 and lysine 516. Residues 616-635 (YKCLECGDSFALEKSLTQHY) form a C2H2-type 1; degenerate zinc finger. Residues 754–779 (LKCLECNEVFQDETSLATHFQQAADT) form a C2H2-type 2; degenerate zinc finger. C2H2-type zinc fingers lie at residues 783-805 (KTCT…QRIH), 842-865 (FRCV…QGSH), 870-893 (YKCP…YTQH), 905-927 (YKCS…FDQH), and 936-959 (FKCP…KSMH). Residue lysine 980 forms a Glycyl lysine isopeptide (Lys-Gly) (interchain with G-Cter in SUMO2) linkage. The tract at residues 983 to 1017 (TQNSANQNKEDTKSMNGKEKLEKKSPSPVKKSMET) is disordered. Residues 990 to 1017 (NKEDTKSMNGKEKLEKKSPSPVKKSMET) are compositionally biased toward basic and acidic residues. 2 consecutive C2H2-type zinc fingers follow at residues 1025–1048 (WTCW…RKEH) and 1055–1078 (HPCR…RIKH). Residues 1085–1111 (YACSHCPDSRRTFTKRLMLEKHVQLMH) form a C2H2-type 10; degenerate zinc finger. A Phosphoserine modification is found at serine 1140. Residues lysine 1144 and lysine 1167 each participate in a glycyl lysine isopeptide (Lys-Gly) (interchain with G-Cter in SUMO2) cross-link. The C2H2-type 11 zinc-finger motif lies at 1203 to 1226 (YQCRECGLCYTSHVSLSRHLFIVH). Residues 1230 to 1263 (EPQPVSKQNGAGEDNQQENKPSHEDESPDGAVSD) form a disordered region. The C2H2-type 12 zinc finger occupies 1264-1286 (RKCKVCAKTFETEAALNTHMRTH).

Belongs to the krueppel C2H2-type zinc-finger protein family.

It localises to the nucleus. May be involved in transcriptional regulation. The sequence is that of Zinc finger protein 532 (ZNF532) from Homo sapiens (Human).